The primary structure comprises 102 residues: Small ribosomal subunit protein uS10 (102 aa).

It belongs to the universal ribosomal protein uS10 family. In terms of assembly, part of the 30S ribosomal subunit.

In terms of biological role, involved in the binding of tRNA to the ribosomes. The sequence is that of Small ribosomal subunit protein uS10 from Streptococcus sanguinis (strain SK36).